A 234-amino-acid chain; its full sequence is Putative lipoyltransferase 2, mitochondrial (234 aa).

Residues 1 to 28 (MPFVRPLVTVVRAGRHSYSAGLQLQQRL) constitute a mitochondrion transit peptide. Positions 39–220 (AEFRNYLVLQ…SFAKVFECRL (182 aa)) constitute a BPL/LPL catalytic domain. Substrate contacts are provided by residues 83 to 90 (RGGLITFH), 150 to 152 (AIG), and 163 to 165 (GIG). Cysteine 181 acts as the Acyl-thioester intermediate in catalysis.

Belongs to the LipB family.

The protein localises to the mitochondrion. The enzyme catalyses octanoyl-[ACP] + L-lysyl-[protein] = N(6)-octanoyl-L-lysyl-[protein] + holo-[ACP] + H(+). Its pathway is protein modification; protein lipoylation via endogenous pathway; protein N(6)-(lipoyl)lysine from octanoyl-[acyl-carrier-protein]: step 1/2. Its function is as follows. Catalyzes the transfer of endogenously produced octanoic acid from octanoyl-acyl-carrier-protein onto the lipoyl domains of lipoate-dependent enzymes. Lipoyl-ACP can also act as a substrate although octanoyl-ACP is likely to be the physiological substrate. This Drosophila melanogaster (Fruit fly) protein is Putative lipoyltransferase 2, mitochondrial.